Here is a 454-residue protein sequence, read N- to C-terminus: Phosphoglucosamine mutase (454 aa).

The active-site Phosphoserine intermediate is Ser-101. Mg(2+) is bound by residues Ser-101, Asp-243, Asp-245, and Asp-247. Position 101 is a phosphoserine (Ser-101).

The protein belongs to the phosphohexose mutase family. Mg(2+) is required as a cofactor. Activated by phosphorylation.

It carries out the reaction alpha-D-glucosamine 1-phosphate = D-glucosamine 6-phosphate. In terms of biological role, catalyzes the conversion of glucosamine-6-phosphate to glucosamine-1-phosphate. This Geotalea daltonii (strain DSM 22248 / JCM 15807 / FRC-32) (Geobacter daltonii) protein is Phosphoglucosamine mutase.